A 677-amino-acid chain; its full sequence is Histidine ammonia-lyase (677 aa).

The segment at residues 269–271 (CSG) is a cross-link (5-imidazolinone (Cys-Gly)). S270 is modified (2,3-didehydroalanine (Ser)).

This sequence belongs to the PAL/histidase family. Contains an active site 4-methylidene-imidazol-5-one (MIO), which is formed autocatalytically by cyclization and dehydration of residues Cys-Ser-Gly.

It carries out the reaction L-histidine = trans-urocanate + NH4(+). The protein operates within amino-acid degradation; L-histidine degradation into L-glutamate; N-formimidoyl-L-glutamate from L-histidine: step 1/3. The sequence is that of Histidine ammonia-lyase from Caenorhabditis elegans.